The sequence spans 375 residues: Outer membrane porin C (375 aa).

The N-terminal stretch at 1–21 (MKVKVLSLLVPALLVAGAANA) is a signal peptide. Topologically, residues 22 to 33 (AEVYNKDGNKLD) are periplasmic. Residues 34–42 (LYGKVDGLH) form a beta stranded membrane-spanning segment. Topologically, residues 43–53 (YFSDDKSVDGD) are extracellular. A beta stranded membrane pass occupies residues 54 to 63 (QTYMRLGFKG). The Periplasmic portion of the chain corresponds to 64–73 (ETQVTDQLTG). Residues 74-84 (YGQWEYQIQGN) form a beta stranded membrane-spanning segment. Residues 85–91 (APESENN) lie on the Extracellular side of the membrane. A beta stranded membrane pass occupies residues 92-101 (SWTRVAFAGL). Over 102–106 (KFQDI) the chain is Periplasmic. A beta stranded membrane pass occupies residues 107–115 (GSFDYGRNY). Over 116-141 (GVVYDVTSWTDVLPEFGGDTYGSDNF) the chain is Extracellular. The beta stranded transmembrane segment at 142–154 (MQQRGNGFATYRN) threads the bilayer. The Periplasmic portion of the chain corresponds to 155–163 (TDFFGLVDG). Residues 164–171 (LNFAVQYQ) traverse the membrane as a beta stranded segment. At 172 to 204 (GQNGSVSGENDPDFTGHGITNNGRKALRQNGDG) the chain is on the extracellular side. Residues 205–211 (VGGSITY) traverse the membrane as a beta stranded segment. The Periplasmic portion of the chain corresponds to 212-215 (DYEG). Residues 216–223 (FGVGAAVS) traverse the membrane as a beta stranded segment. Over 224–245 (SSKRTDAQNTAAYIGNGDRAET) the chain is Extracellular. A beta stranded transmembrane segment spans residues 246–252 (YTGGLKY). Residues 253-256 (DANN) are Periplasmic-facing. The beta stranded transmembrane segment at 257 to 264 (IYLAAQYT) threads the bilayer. Residues 265-273 (QTYNATRVG) lie on the Extracellular side of the membrane. The chain crosses the membrane as a beta stranded span at residues 274–290 (SLGWANKAQNFEAVAQY). Residues 291-295 (QFDFG) are Periplasmic-facing. Residues 296–303 (LRPSVAYL) form a beta stranded membrane-spanning segment. At 304 to 326 (QSKGKNLGTIGTRNYDDEDILKY) the chain is on the extracellular side. A beta stranded membrane pass occupies residues 327-334 (VDVGATYY). The Periplasmic portion of the chain corresponds to 335 to 338 (FNKN). The chain crosses the membrane as a beta stranded span at residues 339-346 (MSTYVDYK). At 347 to 366 (INLLDDNQFTRDAGINTDNI) the chain is on the extracellular side. Residues 367-374 (VALGLVYQ) form a beta stranded membrane-spanning segment. A topological domain (periplasmic) is located at residue F375.

The protein belongs to the Gram-negative porin family. Homotrimer. Forms mixed heterotrimers with OmpF; other mixed heterotrimers are also probable.

Its subcellular location is the cell outer membrane. Functionally, forms pores that allow passive diffusion of small molecules across the outer membrane. In terms of biological role, (Microbial infection) Supports colicin E5 entry in the absence of its major receptor OmpF. Its function is as follows. (Microbial infection) A mixed OmpC-OmpF heterotrimer is the outer membrane receptor for toxin CdiA-EC536. In Escherichia coli O6:K15:H31 (strain 536 / UPEC), this protein is Outer membrane porin C (ompC).